The chain runs to 293 residues: Probable xyloglucan endotransglucosylase/hydrolase protein B (293 aa).

Positions 1 to 21 (MASSLLILCLVLVSLASSALC) are cleaved as a signal peptide. The GH16 domain maps to 23-220 (APRRPVDVPF…WSKAPFVAEY (198 aa)). Glutamate 106 functions as the Nucleophile in the catalytic mechanism. Glutamate 110 serves as the catalytic Proton donor. Glutamate 110 lines the xyloglucan pocket. A glycan (N-linked (GlcNAc...) asparagine) is linked at asparagine 114. Residues 123 to 125 (QTN), 133 to 135 (DRE), 199 to 200 (DW), and glycine 204 contribute to the xyloglucan site. Intrachain disulfides connect cysteine 228-cysteine 237 and cysteine 274-cysteine 287. Arginine 279 contacts xyloglucan.

Belongs to the glycosyl hydrolase 16 family. XTH group 1 subfamily. In terms of processing, contains at least one intrachain disulfide bond essential for its enzymatic activity. In terms of tissue distribution, predominantly expressed in the phloem fibers of growing internodes. Weakly or not expressed in the xylem. In the internode, it is expressed closer to the bottom of the internode compared to XTHA.

The protein localises to the secreted. It localises to the cell wall. The protein resides in the extracellular space. It is found in the apoplast. It catalyses the reaction breaks a beta-(1-&gt;4) bond in the backbone of a xyloglucan and transfers the xyloglucanyl segment on to O-4 of the non-reducing terminal glucose residue of an acceptor, which can be a xyloglucan or an oligosaccharide of xyloglucan.. Functionally, catalyzes xyloglucan endohydrolysis (XEH) and/or endotransglycosylation (XET). Cleaves and religates xyloglucan polymers, an essential constituent of the primary cell wall, and thereby participates in cell wall construction of growing tissues. The polypeptide is Probable xyloglucan endotransglucosylase/hydrolase protein B (XTHB) (Phaseolus angularis (Azuki bean)).